We begin with the raw amino-acid sequence, 159 residues long: Ribosomal RNA large subunit methyltransferase H (159 aa).

Residues L76, G107, and 126–131 (ISSLTL) contribute to the S-adenosyl-L-methionine site.

Belongs to the RNA methyltransferase RlmH family. Homodimer.

The protein localises to the cytoplasm. The enzyme catalyses pseudouridine(1915) in 23S rRNA + S-adenosyl-L-methionine = N(3)-methylpseudouridine(1915) in 23S rRNA + S-adenosyl-L-homocysteine + H(+). Specifically methylates the pseudouridine at position 1915 (m3Psi1915) in 23S rRNA. This chain is Ribosomal RNA large subunit methyltransferase H, found in Cupriavidus metallidurans (strain ATCC 43123 / DSM 2839 / NBRC 102507 / CH34) (Ralstonia metallidurans).